The chain runs to 492 residues: GMP reductase (492 aa).

NADP(+) contacts are provided by residues 30-31 and arginine 78; that span reads SR. CBS domains lie at 99–162 and 164–223; these read LIED…LVET and MTPV…RNAT. NADP(+) contacts are provided by residues 260 to 262 and 313 to 314; these read DIA and VG. K(+) is bound by residues glycine 314, glycine 316, and cysteine 319. The active-site Thioimidate intermediate is the cysteine 319. The Proton donor/acceptor role is filled by threonine 321. Arginine 322 lines the K(+) pocket. GMP-binding positions include 352–354, 375–376, and 401–403; these read DGG, GN, and GMA. Residues methionine 402 and 454–457 each bind NADP(+); that span reads SGIS. Positions 490-492 match the Microbody targeting signal motif; it reads SKL.

It belongs to the IMPDH/GMPR family. GuaC type 1 subfamily. In terms of assembly, homotetramer.

Its subcellular location is the glycosome. It carries out the reaction IMP + NH4(+) + NADP(+) = GMP + NADPH + 2 H(+). With respect to regulation, activated by GTP and inhibited by XMP and the IMP analogs allopurinol nucleotide and thiopurinol nucleotide. In terms of biological role, catalyzes the irreversible NADPH-dependent deamination of GMP to IMP. It functions in the conversion of nucleobase, nucleoside and nucleotide derivatives of G to A nucleotides, and in maintaining the intracellular balance of A and G nucleotides. The polypeptide is GMP reductase (Leishmania donovani).